We begin with the raw amino-acid sequence, 395 residues long: Acetate kinase (395 aa).

Residue Asn8 coordinates Mg(2+). Lys15 is a binding site for ATP. Arg90 is a substrate binding site. Catalysis depends on Asp147, which acts as the Proton donor/acceptor. ATP is bound by residues 207 to 211 (HLGNG), 284 to 286 (DMR), and 330 to 334 (GIGEN). Glu383 provides a ligand contact to Mg(2+).

The protein belongs to the acetokinase family. As to quaternary structure, homodimer. Requires Mg(2+) as cofactor. Mn(2+) serves as cofactor.

Its subcellular location is the cytoplasm. It carries out the reaction acetate + ATP = acetyl phosphate + ADP. Its pathway is metabolic intermediate biosynthesis; acetyl-CoA biosynthesis; acetyl-CoA from acetate: step 1/2. Its function is as follows. Catalyzes the formation of acetyl phosphate from acetate and ATP. Can also catalyze the reverse reaction. The sequence is that of Acetate kinase from Enterococcus faecalis (strain ATCC 700802 / V583).